Consider the following 903-residue polypeptide: Disintegrin and metalloproteinase domain-containing protein 12 (903 aa).

The signal sequence occupies residues 1–31; it reads MAERPARRAPPARALLLALAGALLAPRAARG. Positions 32-205 are excised as a propeptide; sequence MSLWDQRGTY…SQMRARRHKR (174 aa). Asn-112, Asn-147, and Asn-157 each carry an N-linked (GlcNAc...) asparagine glycan. A Cysteine switch motif is present at residues 175–182; that stretch reads GLCGSQHN. Cys-177 provides a ligand contact to Zn(2+). Asn-182 and Asn-185 each carry an N-linked (GlcNAc...) asparagine glycan. The Extracellular portion of the chain corresponds to 206–706; that stretch reads ETLKMTKYVE…GPIRQADNQG (501 aa). One can recognise a Peptidase M12B domain in the interval 212–414; that stretch reads KYVELVIVAD…GMGMCLFNLP (203 aa). Intrachain disulfides connect Cys-323-Cys-409, Cys-365-Cys-393, and Cys-367-Cys-376. His-348 provides a ligand contact to Zn(2+). Glu-349 is an active-site residue. His-352 and His-358 together coordinate Zn(2+). The region spanning 422 to 508 is the Disintegrin domain; the sequence is GRKCGNGYVE…HCPANVYLHD (87 aa). The N-linked (GlcNAc...) asparagine glycan is linked to Asn-450. An intrachain disulfide couples Cys-480 to Cys-500. N-linked (GlcNAc...) asparagine glycosylation occurs at Asn-649. The region spanning 654 to 686 is the EGF-like domain; it reads GVHKCAMQCHGRGVCNNRKNCHCEAHWAPPFCD. 3 disulfides stabilise this stretch: Cys-658/Cys-668, Cys-662/Cys-674, and Cys-676/Cys-685. Residues 707-727 form a helical membrane-spanning segment; it reads LTVGILVSILCLLAAGFVVYL. At 728–903 the chain is on the cytoplasmic side; the sequence is KRKTLMRLLF…PRPSHNAYIK (176 aa). Disordered regions lie at residues 753–790 and 819–903; these read SRTPSGPHLGQAHHTPGKGLLMNRAPHFNTPKDRHSLK and HQTP…AYIK. Short sequence motifs (SH3-binding; class II) lie at residues 824–830 and 846–852; these read APSGPAR and KPSPPQK. 3 short sequence motifs (SH3-binding; class I) span residues 830 to 837, 852 to 858, and 881 to 887; these read RPLPASPA, KPLPADP, and RPAPIRP. The segment covering 847 to 856 has biased composition (pro residues); the sequence is PSPPQKPLPA. Tyr-901 carries the post-translational modification Phosphotyrosine; by SRC.

In terms of assembly, interacts with alpha-actinin-2 and with syndecans. Interacts with SH3PXD2A. Interacts with FST3. Interacts with RACK1; the interaction is required for PKC-dependent translocation of ADAM12 to the cell membrane. It depends on Zn(2+) as a cofactor. Post-translationally, the precursor is cleaved by a furin endopeptidase. As to expression, expressed during early developing mesenchymal cells that give rise to skeletal muscle, bones and visceral organs. Not expressed in adult normal muscle but expressed in regenerating muscle.

Its subcellular location is the membrane. Involved in skeletal muscle regeneration, specifically at the onset of cell fusion. Also involved in macrophage-derived giant cells (MGC) and osteoclast formation from mononuclear precursors. The polypeptide is Disintegrin and metalloproteinase domain-containing protein 12 (Adam12) (Mus musculus (Mouse)).